The chain runs to 337 residues: Movement protein (337 aa).

Positions 1–11 (MAGLWRSNSTL) are enriched in polar residues. Disordered regions lie at residues 1 to 24 (MAGLWRSNSTLDVERGRNRTQTET) and 273 to 337 (SVVR…VRQT).

The protein resides in the host cell junction. The protein localises to the host plasmodesma. Functionally, transports viral genome to neighboring plant cells directly through plasmosdesmata, without any budding. The movement protein allows efficient cell to cell propagation, by bypassing the host cell wall barrier. Acts by forming a tubular structure at the host plasmodesmata, enlarging it enough to allow free passage of virion capsids. The protein is Movement protein of Olive latent virus 2 (isolate Italy) (OLV-2).